We begin with the raw amino-acid sequence, 969 residues long: RNA polymerase-associated protein RapA (969 aa).

A Helicase ATP-binding domain is found at 164-334 (EVGRRHAPRV…FARLRLLDSD (171 aa)). 177–184 (DEVGLGKT) contributes to the ATP binding site. The DEAH box signature appears at 280 to 283 (DEAH). Residues 492-668 (RVNWLLEKLK…GSNEALDDVI (177 aa)) enclose the Helicase C-terminal domain.

It belongs to the SNF2/RAD54 helicase family. RapA subfamily. As to quaternary structure, interacts with the RNAP. Has a higher affinity for the core RNAP than for the holoenzyme. Its ATPase activity is stimulated by binding to RNAP.

Functionally, transcription regulator that activates transcription by stimulating RNA polymerase (RNAP) recycling in case of stress conditions such as supercoiled DNA or high salt concentrations. Probably acts by releasing the RNAP, when it is trapped or immobilized on tightly supercoiled DNA. Does not activate transcription on linear DNA. Probably not involved in DNA repair. The chain is RNA polymerase-associated protein RapA from Vibrio vulnificus (strain CMCP6).